The sequence spans 491 residues: Cadherin-3 (491 aa).

Cadherin domains lie at 1-102 (ENTV…PPVF), 103-208 (VPPS…DHGP), and 209-314 (VPEP…DPWT). Residues 1 to 316 (ENTVSHEVQR…VTCRDPWTWG (316 aa)) lie on the Extracellular side of the membrane. Asparagine 228 carries N-linked (GlcNAc...) asparagine glycosylation. Residues 317–339 (FLLPILGAALALLLLLLVLLFLV) traverse the membrane as a helical segment. Topologically, residues 340 to 491 (RKKRKIKEPL…ADMYGGGQDD (152 aa)) are cytoplasmic.

Interacts with CDCP1 and CTNNB1.

The protein resides in the cell membrane. Cadherins are calcium-dependent cell adhesion proteins. They preferentially interact with themselves in a homophilic manner in connecting cells; cadherins may thus contribute to the sorting of heterogeneous cell types. The chain is Cadherin-3 (CDH3) from Bos taurus (Bovine).